A 470-amino-acid polypeptide reads, in one-letter code: Cell division protein FtsP (470 aa).

The segment at residues 1-29 (MKNCSRRQLLKTTLFSTALFSVPAPLLAA) is a signal peptide (tat-type signal).

It belongs to the FtsP family. Post-translationally, predicted to be exported by the Tat system. The position of the signal peptide cleavage has not been experimentally proven.

The protein resides in the periplasm. Its function is as follows. Cell division protein that is required for growth during stress conditions. May be involved in protecting or stabilizing the divisomal assembly under conditions of stress. This is Cell division protein FtsP from Aggregatibacter aphrophilus (strain NJ8700) (Haemophilus aphrophilus).